We begin with the raw amino-acid sequence, 217 residues long: Pyridoxine/pyridoxamine 5'-phosphate oxidase (217 aa).

Residues 13 to 16 (RREY) and Lys-71 contribute to the substrate site. FMN contacts are provided by residues 66 to 71 (RTVLLK), 81 to 82 (YT), Arg-87, Lys-88, and Gln-110. Substrate contacts are provided by Tyr-128, Arg-132, and Ser-136. FMN is bound by residues 145 to 146 (QS) and Trp-190. 196-198 (RLH) lines the substrate pocket. Arg-200 contributes to the FMN binding site.

Belongs to the pyridoxamine 5'-phosphate oxidase family. Homodimer. Requires FMN as cofactor.

The catalysed reaction is pyridoxamine 5'-phosphate + O2 + H2O = pyridoxal 5'-phosphate + H2O2 + NH4(+). It carries out the reaction pyridoxine 5'-phosphate + O2 = pyridoxal 5'-phosphate + H2O2. Its pathway is cofactor metabolism; pyridoxal 5'-phosphate salvage; pyridoxal 5'-phosphate from pyridoxamine 5'-phosphate: step 1/1. It functions in the pathway cofactor metabolism; pyridoxal 5'-phosphate salvage; pyridoxal 5'-phosphate from pyridoxine 5'-phosphate: step 1/1. Functionally, catalyzes the oxidation of either pyridoxine 5'-phosphate (PNP) or pyridoxamine 5'-phosphate (PMP) into pyridoxal 5'-phosphate (PLP). The sequence is that of Pyridoxine/pyridoxamine 5'-phosphate oxidase from Rubrobacter xylanophilus (strain DSM 9941 / JCM 11954 / NBRC 16129 / PRD-1).